The chain runs to 305 residues: MLRIIFLGTGGSLPTRNRNPSAVIVNLKGELLLFDCGEGTQQQMMRAKTGMMSLSSIFVSHFHADHFLGIPGLIQTMSFLGRKEPLTIYGPEGTKEFTEVFKVLGYCNLKYEVRGVELSPGDIVEGKNYVVRALKTEHSTPSLGYSLIENPRPGRFNREKAVELGVLPGPLFAKLQKGNPVEVNGKLVKPEEVVGAPRPGRTVVYSGDTRPCEAVLEASRDADVLIHDGSFADEMAGWAEESMHSTAGEVASLAKEAGVRQLVLTHISSRYTDDVGPILNDSRKVFENVIVAEDLMELEVPYRPD.

His-61, His-63, Asp-65, His-66, His-138, Asp-208, and His-266 together coordinate Zn(2+). The Proton acceptor role is filled by Asp-65.

This sequence belongs to the RNase Z family. Homodimer. Requires Zn(2+) as cofactor.

It catalyses the reaction Endonucleolytic cleavage of RNA, removing extra 3' nucleotides from tRNA precursor, generating 3' termini of tRNAs. A 3'-hydroxy group is left at the tRNA terminus and a 5'-phosphoryl group is left at the trailer molecule.. Functionally, zinc phosphodiesterase, which displays some tRNA 3'-processing endonuclease activity. Probably involved in tRNA maturation, by removing a 3'-trailer from precursor tRNA. The polypeptide is Ribonuclease Z (Methanosarcina mazei (strain ATCC BAA-159 / DSM 3647 / Goe1 / Go1 / JCM 11833 / OCM 88) (Methanosarcina frisia)).